The following is a 731-amino-acid chain: Penicillin-binding protein 2a (731 aa).

Topologically, residues methionine 1 to lysine 56 are cytoplasmic. The chain crosses the membrane as a helical; Signal-anchor for type II membrane protein span at residues isoleucine 57–alanine 77. Residues lysine 78–serine 156 form a hydrophobic; associated with cytoplasmic membrane. Required for transglycosylase activity, but not for lipid II binding region. The interval lysine 78–lysine 300 is transglycosylase. Topologically, residues lysine 78–arginine 731 are extracellular. Glutamate 131 serves as the catalytic Proton donor; for transglycosylase activity. The segment at isoleucine 301 to arginine 731 is transpeptidase. Catalysis depends on serine 410, which acts as the Acyl-ester intermediate; for transpeptidase activity. Residues alanine 674 to aspartate 694 are disordered. Positions threonine 676 to aspartate 690 are enriched in polar residues.

In the N-terminal section; belongs to the glycosyltransferase 51 family. It in the C-terminal section; belongs to the transpeptidase family. Homodimer. May also form higher order oligomers. Self-association may depend on its transmembrane and/or cytoplasmic regions. Interacts with MacP; interaction is required for the function of this protein.

The protein resides in the cell membrane. It is found in the secreted. Its subcellular location is the cell wall. The enzyme catalyses Preferential cleavage: (Ac)2-L-Lys-D-Ala-|-D-Ala. Also transpeptidation of peptidyl-alanyl moieties that are N-acyl substituents of D-alanine.. It catalyses the reaction [GlcNAc-(1-&gt;4)-Mur2Ac(oyl-L-Ala-gamma-D-Glu-L-Lys-D-Ala-D-Ala)](n)-di-trans,octa-cis-undecaprenyl diphosphate + beta-D-GlcNAc-(1-&gt;4)-Mur2Ac(oyl-L-Ala-gamma-D-Glu-L-Lys-D-Ala-D-Ala)-di-trans,octa-cis-undecaprenyl diphosphate = [GlcNAc-(1-&gt;4)-Mur2Ac(oyl-L-Ala-gamma-D-Glu-L-Lys-D-Ala-D-Ala)](n+1)-di-trans,octa-cis-undecaprenyl diphosphate + di-trans,octa-cis-undecaprenyl diphosphate + H(+). The protein operates within cell wall biogenesis; peptidoglycan biosynthesis. Functionally, cell wall formation. Synthesis of cross-linked peptidoglycan (PG) from the lipid intermediates. Binds dansylated lipid II and catalyzes the polymerization of glycan chains. Hydrolyzes S2d (N-benzoyl-D-alanylmercaptoacetic acid) molecule, a synthetic thiolester analog of cell wall stem peptide. Active against bocillin, a fluorescent penicillin. No transpeptidase activity with non-fluorescent lysine-containing lipid II as substrate. This is Penicillin-binding protein 2a from Streptococcus pneumoniae serotype 2 (strain D39 / NCTC 7466).